Consider the following 331-residue polypeptide: DNA-directed RNA polymerase subunit alpha (331 aa).

Positions 1–233 (MVREEIAVST…DLFLPFLHAE (233 aa)) are alpha N-terminal domain (alpha-NTD). The tract at residues 268–331 (ALKRVFIDQS…GILQKRFAID (64 aa)) is alpha C-terminal domain (alpha-CTD).

Belongs to the RNA polymerase alpha chain family. As to quaternary structure, in plastids the minimal PEP RNA polymerase catalytic core is composed of four subunits: alpha, beta, beta', and beta''. When a (nuclear-encoded) sigma factor is associated with the core the holoenzyme is formed, which can initiate transcription.

It localises to the plastid. Its subcellular location is the chloroplast. The enzyme catalyses RNA(n) + a ribonucleoside 5'-triphosphate = RNA(n+1) + diphosphate. In terms of biological role, DNA-dependent RNA polymerase catalyzes the transcription of DNA into RNA using the four ribonucleoside triphosphates as substrates. This chain is DNA-directed RNA polymerase subunit alpha, found in Illicium oligandrum (Star anise).